We begin with the raw amino-acid sequence, 447 residues long: Argininosuccinate synthase (447 aa).

Residues 17–25 (AFSGGLDTS) and alanine 43 contribute to the ATP site. Tyrosine 99 serves as a coordination point for L-citrulline. Residues glycine 129 and threonine 131 each contribute to the ATP site. L-aspartate-binding residues include threonine 131, asparagine 135, and aspartate 136. Asparagine 135 serves as a coordination point for L-citrulline. ATP is bound at residue aspartate 136. Positions 139 and 192 each coordinate L-citrulline. Residue aspartate 194 participates in ATP binding. L-citrulline-binding residues include threonine 201, glutamate 203, and glutamate 280.

The protein belongs to the argininosuccinate synthase family. Type 2 subfamily. Homotetramer.

It localises to the cytoplasm. The enzyme catalyses L-citrulline + L-aspartate + ATP = 2-(N(omega)-L-arginino)succinate + AMP + diphosphate + H(+). It participates in amino-acid biosynthesis; L-arginine biosynthesis; L-arginine from L-ornithine and carbamoyl phosphate: step 2/3. The protein is Argininosuccinate synthase of Escherichia coli O8 (strain IAI1).